The primary structure comprises 983 residues: Chaperone protein ClpB3, mitochondrial (983 aa).

The transit peptide at M1–Y87 directs the protein to the mitochondrion. The 144-residue stretch at P97–S240 folds into the Clp R domain. Repeat regions lie at residues F100–Q165 and I177–S240. An i region spans residues L255–P503. G300–T307 lines the ATP pocket. The stretch at I504–E627 forms a coiled coil. The tract at residues V629–S820 is II. G703–T710 provides a ligand contact to ATP.

It belongs to the ClpA/ClpB family.

The protein localises to the mitochondrion. Molecular chaperone that may not be involved in heat stress response or tolerance. The chain is Chaperone protein ClpB3, mitochondrial (CLPB3) from Oryza sativa subsp. japonica (Rice).